The primary structure comprises 1331 residues: Mitogen-activated protein kinase kinase kinase 15 (1331 aa).

Positions 1 to 13 (MEGGGGSGGGGGP) are enriched in gly residues. A disordered region spans residues 1–61 (MEGGGGSGGG…GEAEGGRGPR (61 aa)). Positions 656-912 (NGERVVLGKG…AADLLQEGFL (257 aa)) constitute a Protein kinase domain. Residues 662–670 (LGKGSYGIV) and K685 each bind ATP. The active-site Proton acceptor is D777. 2 disordered regions span residues 934–964 (GTGT…SDAQ) and 983–1005 (LSVP…EERD). Positions 940 to 962 (LPSSGELVGSSSSEHGSISPDSD) are enriched in low complexity. The segment covering 992 to 1005 (LDDRSTALPPEERD) has biased composition (basic and acidic residues). Residues 1216 to 1236 (LVQKEREYQNLLRLILDQKTQ) adopt a coiled-coil conformation.

It belongs to the protein kinase superfamily. STE Ser/Thr protein kinase family. MAP kinase kinase kinase subfamily. Requires Mg(2+) as cofactor.

The enzyme catalyses L-seryl-[protein] + ATP = O-phospho-L-seryl-[protein] + ADP + H(+). The catalysed reaction is L-threonyl-[protein] + ATP = O-phospho-L-threonyl-[protein] + ADP + H(+). Its activity is regulated as follows. Contains an N-terminal autoinhibitory domain. Activated by phosphorylation at Thr-816, inhibited by phosphorylation at Ser-928. In terms of biological role, serine/threonine kinase which acts as a component of the MAP kinase signal transduction pathway. Once activated, acts as an upstream activator of the p38 MAPK signal transduction cascade through the phosphorylation and activation of several MAP kinase kinases. May function in a signal transduction pathway that is activated by various cell stresses and leads to apoptosis. Involved in phosphorylation of WNK4 in response to osmotic stress or hypotonic low-chloride stimulation via the p38 MAPK signal transduction cascade. This chain is Mitogen-activated protein kinase kinase kinase 15, found in Mus musculus (Mouse).